The chain runs to 272 residues: Phosphate import ATP-binding protein PstB 2 (272 aa).

The region spanning 26-267 is the ABC transporter domain; sequence IEINNLCLNY…PIHKQTEDYI (242 aa). 58–65 is an ATP binding site; it reads GPSGCGKS.

The protein belongs to the ABC transporter superfamily. Phosphate importer (TC 3.A.1.7) family. As to quaternary structure, the complex is composed of two ATP-binding proteins (PstB), two transmembrane proteins (PstC and PstA) and a solute-binding protein (PstS).

The protein resides in the cell inner membrane. It carries out the reaction phosphate(out) + ATP + H2O = ADP + 2 phosphate(in) + H(+). Functionally, part of the ABC transporter complex PstSACB involved in phosphate import. Responsible for energy coupling to the transport system. This Aliivibrio fischeri (strain ATCC 700601 / ES114) (Vibrio fischeri) protein is Phosphate import ATP-binding protein PstB 2.